Reading from the N-terminus, the 86-residue chain is High affinity immunoglobulin epsilon receptor subunit gamma (86 aa).

Positions 1–18 (MIPAVVLLLLLLVEQAAA) are cleaved as a signal peptide. Residues 19–23 (LGEPQ) are Extracellular-facing. Residues 24 to 44 (LCYILDAILFLYGIVLTLLYC) traverse the membrane as a helical segment. Topologically, residues 45–86 (RLKLQVRKAAIDSYEKSDGVYTGLSTRNQETYETLKHEKPPQ) are cytoplasmic. The region spanning 54-82 (AIDSYEKSDGVYTGLSTRNQETYETLKHE) is the ITAM domain. A Phosphotyrosine modification is found at Tyr65. Ser69 carries the phosphoserine modification. Position 76 is a phosphotyrosine (Tyr76). Residue Thr78 is modified to Phosphothreonine.

The protein belongs to the CD3Z/FCER1G family. As to quaternary structure, igE Fc receptor is a tetramer of an alpha chain, a beta chain, and two disulfide linked gamma chains. Associates with FCGR1A; forms a functional signaling complex. The signaling subunit of immunoglobulin gamma (IgG) Fc receptor complex. As a homodimer or a heterodimer of CD247 and FCER1G, associates with the ligand binding subunit FCGR3A to form a functional receptor complex. Associates with CLEC6A. Interacts with CLEC4E. Interacts (via ITAM domain) with SYK (via SH2 domains); activates SYK, enabling integrin-mediated activation of neutrophils and macrophages. Interacts with common beta chain of interleukin 3 receptor CSF2RB and recruits SYK in response to IL3 stimulation; this interaction is direct. Interacts with CD300LH; the interaction may be indirect. Interacts with CD300LD. Interacts with TARM1.

Its subcellular location is the cell membrane. Functionally, adapter protein containing an immunoreceptor tyrosine-based activation motif (ITAM) that transduces activation signals from various immunoreceptors. As a component of the high-affinity immunoglobulin E (IgE) receptor, mediates allergic inflammatory signaling in mast cells. As a constitutive component of interleukin-3 receptor complex, selectively mediates interleukin 4/IL4 production b basophils priming T-cells toward effector T-helper 2 subset. Associates with pattern recognition receptors CLEC4D and CLEC4E to form a functional signaling complex in myeloid cells. Binding of mycobacterial trehalose 6,6'-dimycolate (TDM) to this receptor complex leads to phosphorylation of ITAM, triggering activation of SYK, CARD9 and NF-kappa-B, consequently driving maturation of antigen-presenting cells and shaping antigen-specific priming of T-cells toward effector T-helper 1 and T-helper 17 cell subtypes. May function cooperatively with other activating receptors. Functionally linked to integrin beta-2/ITGB2-mediated neutrophil activation. Also involved in integrin alpha-2/ITGA2-mediated platelet activation. The polypeptide is High affinity immunoglobulin epsilon receptor subunit gamma (FCER1G) (Sus scrofa (Pig)).